The chain runs to 51 residues: PDTTYLGPLNCKSCWQKFDSLVRCHDHYLCRHCLNLLLTSSDRCPLCKYPL.

The RING-type; atypical zinc finger occupies Cys11–Cys47.

It belongs to the arenaviridae Z protein family. As to quaternary structure, interacts with protein NP; this interaction probably directs the encapsidated genome to budding sites. Interacts (via RING-type zinc finger) with polymerase L; this interaction inhibits viral transcription and replication, Z partially blocks the product exit tunnel for the releasing nascent RNA product. Interacts with the glycoprotein complex; this interaction plays a role in virion budding. Interacts (via RING-type zinc finger) with host EIF4E; this interaction results in conformational changes of both interacting proteins and reduces EIF4E affinity for its substrate, the 5'-m7 G cap structure. Interacts (via late-budding domain) with host TSG101; this interaction is essential for budding and release of viral particles. Interacts with host RPLP0; this interaction may serve to load ribosome-like particles inside the virion. Interacts with host PML; this interaction induces PML bodies redistribution in the cytoplasm upon viral infection.

It is found in the virion. It localises to the host cytoplasm. The protein resides in the host perinuclear region. The protein localises to the host cell membrane. Plays a crucial role in virion assembly and budding. Expressed late in the virus life cycle, it acts as an inhibitor of viral transcription and RNA synthesis by interacting with the viral polymerase L. Presumably recruits the NP encapsidated genome to cellular membranes at budding sites via direct interaction with NP. Plays critical roles in the final steps of viral release by interacting with host TSG101, a member of the vacuolar protein-sorting pathway and using other cellular host proteins involved in vesicle formation pathway. The budding of the virus progeny occurs after association of protein Z with the viral glycoprotein complex SSP-GP1-GP2 at the cell periphery, step that requires myristoylation of protein Z. Also selectively represses protein production by associating with host EIF4E. In cell-based minigenome assay, has an inhibitory effect on the ribonucleoprotein machinery (vRNP), which is responsible for the replication and transcription of the viral genome. This Homo sapiens (Human) protein is RING finger protein Z (Z).